We begin with the raw amino-acid sequence, 238 residues long: Monocyte to macrophage differentiation factor (238 aa).

Residues 1-28 lie on the Cytoplasmic side of the membrane; the sequence is MQFRNRFQRFMNHRAPANGRYKPTCYEH. A helical membrane pass occupies residues 29-49; it reads AANCYTHAFLIVPAIVGSALL. Residues 50-61 are Lumenal-facing; the sequence is HRLSDDCWEKIT. Residues 62–82 form a helical membrane-spanning segment; sequence AWIYGMGLCALFIVSTVFHIV. The Cytoplasmic segment spans residues 83–101; that stretch reads SWKKSHLRTVEHCFHMCDR. The helical transmembrane segment at 102–122 threads the bilayer; it reads MVIYFFIAASYAPWLNLRELG. Pro123 is a topological domain (lumenal). Residues 124–144 form a helical membrane-spanning segment; the sequence is LASHMRWFIWLMAAGGTIYVF. The Cytoplasmic segment spans residues 145–151; sequence LYHEKYK. The chain crosses the membrane as a helical span at residues 152 to 172; that stretch reads VVELFFYLTMGFSPALVVTSM. At 173-174 the chain is on the lumenal side; it reads NN. The helical transmembrane segment at 175-195 threads the bilayer; it reads TDGLQELACGGLIYCLGVVFF. Topologically, residues 196-198 are cytoplasmic; sequence KSD. A helical transmembrane segment spans residues 199–219; that stretch reads GIIPFAHAIWHLFVATAAAVH. The Lumenal segment spans residues 220 to 238; it reads YYAIWKYLYRSPTDFIRHL.

The protein belongs to the ADIPOR family. Preferentially expressed in the brain.

The protein resides in the late endosome membrane. The protein localises to the lysosome membrane. In terms of biological role, is involved in the dynamics of lysosomal membranes associated with microglial activation following brain lesion. The protein is Monocyte to macrophage differentiation factor of Rattus norvegicus (Rat).